The following is a 131-amino-acid chain: Glycine cleavage system H protein (131 aa).

One can recognise a Lipoyl-binding domain in the interval 24-106; that stretch reads TVRVGITDYA…YGEGWLVELQ (83 aa). Lysine 65 is subject to N6-lipoyllysine.

This sequence belongs to the GcvH family. The glycine cleavage system is composed of four proteins: P, T, L and H. The cofactor is (R)-lipoate.

The glycine cleavage system catalyzes the degradation of glycine. The H protein shuttles the methylamine group of glycine from the P protein to the T protein. The protein is Glycine cleavage system H protein of Mycolicibacterium vanbaalenii (strain DSM 7251 / JCM 13017 / BCRC 16820 / KCTC 9966 / NRRL B-24157 / PYR-1) (Mycobacterium vanbaalenii).